Here is a 245-residue protein sequence, read N- to C-terminus: Cypemycin N-terminal methyltransferase (245 aa).

The protein belongs to the methyltransferase superfamily.

The enzyme catalyses N-terminal L-alanyl-[cypemycin] + 2 S-adenosyl-L-methionine = N-terminal N,N-dimethyl-L-alanyl-[cypemycin] + 2 S-adenosyl-L-homocysteine + 3 H(+). Involved in the biosynthesis of the lanaridin cypemycin. The enzyme can methylate a variety of oligopeptides, cyclic peptides and the epsilon-amino group of lysine. This Streptomyces sp protein is Cypemycin N-terminal methyltransferase.